The chain runs to 97 residues: Probable gamma-secretase subunit PEN-2 (97 aa).

Topologically, residues 1–20 (MLIPEDDKLDDEKMINIAKK) are cytoplasmic. The segment at residues 21 to 39 (LWFIGFFFLPWVWLINILY) is an intramembrane region (helical). At 40–55 (FIPYRNSLNDKVKWYL) the chain is on the cytoplasmic side. A helical transmembrane segment spans residues 56–76 (KFSLIGFLGYSTIFMGWMGIY). The Lumenal segment spans residues 77–97 (LVNRNKWGAFGDDISITIPFG).

It belongs to the PEN-2 family. In terms of assembly, the functional gamma-secretase complex is composed of at least four polypeptides: a presenilin homodimer, nicastrin, aph1 and psenen.

The protein localises to the endoplasmic reticulum membrane. It is found in the golgi apparatus. It localises to the golgi stack membrane. Its subcellular location is the cell membrane. The protein resides in the membrane. In terms of biological role, essential subunit of the gamma-secretase complex, an endoprotease complex that catalyzes the intramembrane cleavage of integral membrane proteins such as Notch receptors. The gamma-secretase complex plays a role in Notch and Wnt signaling cascades and regulation of downstream processes via its role in processing key regulatory proteins. The chain is Probable gamma-secretase subunit PEN-2 (psenen) from Dictyostelium discoideum (Social amoeba).